The primary structure comprises 229 residues: Prolactin (229 aa).

Positions 1–30 are cleaved as a signal peptide; it reads MDSKGSAQKGSRLLLLLVVSNLLLCQGVVS. Cysteines 34 and 41 form a disulfide. Phosphoserine occurs at positions 56, 64, and 120. 2 disulfide bridges follow: cysteine 88/cysteine 204 and cysteine 221/cysteine 229.

This sequence belongs to the somatotropin/prolactin family. As to quaternary structure, interacts with PRLR.

It is found in the secreted. Its function is as follows. Prolactin acts primarily on the mammary gland by promoting lactation. The sequence is that of Prolactin (PRL) from Capra hircus (Goat).